Reading from the N-terminus, the 975-residue chain is C-1-tetrahydrofolate synthase, mitochondrial (975 aa).

The N-terminal 34 residues, 1–34 (MLSRLSLLSNSRAFQQARWRIYRLKVSPTVHASQ), are a transit peptide targeting the mitochondrion. Residues 35–343 (YHILSGRKLA…KPLPLHLESP (309 aa)) form a methylenetetrahydrofolate dehydrogenase and cyclohydrolase region. Substrate-binding positions include 83 to 87 (YVRMK) and 130 to 132 (IQL). NADP(+)-binding positions include 201 to 203 (GRS) and Ser-226. 301 to 305 (PGGVG) lines the substrate pocket. Positions 344 to 975 (VPSDIDISRA…DDDGEIEGLF (632 aa)) are formyltetrahydrofolate synthetase. Position 408–415 (408–415 (TPLGEGKS)) interacts with ATP.

The protein in the N-terminal section; belongs to the tetrahydrofolate dehydrogenase/cyclohydrolase family. It in the C-terminal section; belongs to the formate--tetrahydrofolate ligase family. In terms of assembly, homodimer.

It localises to the mitochondrion. The enzyme catalyses (6R)-5,10-methylene-5,6,7,8-tetrahydrofolate + NADP(+) = (6R)-5,10-methenyltetrahydrofolate + NADPH. It carries out the reaction (6R)-5,10-methenyltetrahydrofolate + H2O = (6R)-10-formyltetrahydrofolate + H(+). It catalyses the reaction (6S)-5,6,7,8-tetrahydrofolate + formate + ATP = (6R)-10-formyltetrahydrofolate + ADP + phosphate. It functions in the pathway one-carbon metabolism; tetrahydrofolate interconversion. Functionally, mitochondrial isozyme of C-1-tetrahydrofolate synthase. The trifunctional enzyme catalyzes the interconversion of the one-carbon derivatives of tetrahydrofolate (THF) between different oxidation states by the enzymatic activities 10-formyltetrahydrofolate synthetase, 5,lO-methenyltetrahydrofolate cyclohydrolase, and 5,lO-methylenetetrahydrofolate dehydrogenase. This Saccharomyces cerevisiae (strain ATCC 204508 / S288c) (Baker's yeast) protein is C-1-tetrahydrofolate synthase, mitochondrial.